The sequence spans 320 residues: Formimidoylglutamase (320 aa).

Mn(2+) is bound by residues H125, D153, H155, D157, D244, and D246.

It belongs to the arginase family. Requires Mn(2+) as cofactor.

It carries out the reaction N-formimidoyl-L-glutamate + H2O = formamide + L-glutamate. The protein operates within amino-acid degradation; L-histidine degradation into L-glutamate; L-glutamate from N-formimidoyl-L-glutamate (hydrolase route): step 1/1. In terms of biological role, catalyzes the conversion of N-formimidoyl-L-glutamate to L-glutamate and formamide. The sequence is that of Formimidoylglutamase from Rhodococcus opacus (strain B4).